The primary structure comprises 205 residues: Probable GTP-binding protein EngB (205 aa).

Residues 22 to 196 (NLPEVAFVGR…LKVLDEFIHK (175 aa)) form the EngB-type G domain. GTP contacts are provided by residues 30–37 (GRSNVGKS), 57–61 (GRTQL), 76–79 (DLPG), 143–146 (TKVD), and 175–177 (FSA). Positions 37 and 59 each coordinate Mg(2+).

The protein belongs to the TRAFAC class TrmE-Era-EngA-EngB-Septin-like GTPase superfamily. EngB GTPase family. Mg(2+) is required as a cofactor.

Functionally, necessary for normal cell division and for the maintenance of normal septation. This Desulforamulus reducens (strain ATCC BAA-1160 / DSM 100696 / MI-1) (Desulfotomaculum reducens) protein is Probable GTP-binding protein EngB.